Reading from the N-terminus, the 446-residue chain is Nuclear distribution protein PAC1-1 (446 aa).

In terms of domain architecture, LisH spans 9 to 41 (QAEELHKSLIAYLSSINASQSVTTLREELQIGD). Residues 60–86 (ISVVRLQKRILDLESKIASLQAELDSA) adopt a coiled-coil conformation. WD repeat units lie at residues 112-153 (SHRG…RTLK), 155-195 (HTRT…ANIR), 199-239 (GHDH…CVKT), 242-281 (TQGDWVRDVFPSFDGKWLVSGGRDQAATIWEVSSGEARAS), 284-344 (GHEN…IKTL), 346-385 (GHNNWVRGLVFHPGGKYLFSVGDDKTIRCWDLSQEGKLVK), 390-430 (AHEH…TGFR), and 432-446 (VIATGSADSCVRVFM).

The protein belongs to the WD repeat LIS1/nudF family. As to quaternary structure, self-associates. Interacts with NDL1 and dynein.

The protein localises to the cytoplasm. Its subcellular location is the cytoskeleton. It is found in the spindle pole. Its function is as follows. Positively regulates the activity of the minus-end directed microtubule motor protein dynein. May enhance dynein-mediated microtubule sliding by targeting dynein to the microtubule plus end. Required for nuclear migration during vegetative growth as well as development. Required for retrograde early endosome (EE) transport from the hyphal tip. Required for localization of dynein to the mitotic spindle poles. Recruits additional proteins to the dynein complex at SPBs. The polypeptide is Nuclear distribution protein PAC1-1 (Uncinocarpus reesii (strain UAMH 1704)).